The primary structure comprises 222 residues: Lipid transferase CIDEC (222 aa).

Residues 1 to 19 (MAMYTAVSTSVVTQQQLSE) are compositionally biased toward polar residues. Disordered regions lie at residues 1 to 33 (MAMY…CRVT) and 203 to 222 (EQPP…KMLQ). Residues 1–33 (MAMYTAVSTSVVTQQQLSEPSAEAPRARPCRVT) are required for liquid-liquid phase separation (LLPS). Positions 26-103 (RARPCRVTTA…VLHKGQKWQP (78 aa)) constitute a CIDE-N domain.

Belongs to the CIDE family. In terms of assembly, homodimer. Homooligomer; undergoes liquid-liquid phase separation (LLPS) via its N-terminus, facilitating lipid droplet fusion, occurs at the lipid droplet contact sites. Interacts with CIDEA. Interacts with PLIN1. Interacts with NFAT5; this interaction is direct and retains NFAT5 in the cytoplasm. Interacts with CEBPB. Interacts with isoform CLSTN3beta of CLSTN3; inhibiting the lipid transferase activity of CIDEC. Ubiquitinated and targeted to proteasomal degradation, resulting in a short half-life (about 15 minutes in 3T3-L1 cells). Protein stability depends on triaclyglycerol synthesis, fatty acid availability and lipid droplet formation.

It localises to the lipid droplet. The protein localises to the endoplasmic reticulum. It is found in the nucleus. The enzyme catalyses a triacyl-sn-glycerol(in) = a triacyl-sn-glycerol(out). In terms of biological role, lipid transferase specifically expressed in white adipose tissue, which promotes unilocular lipid droplet formation by mediating lipid droplet fusion. Lipid droplet fusion promotes their enlargement, restricting lipolysis and favoring lipid storage. Localizes on the lipid droplet surface, at focal contact sites between lipid droplets, and mediates atypical lipid droplet fusion by undergoing liquid-liquid phase separation (LLPS) and promoting directional net neutral lipid transfer from the smaller to larger lipid droplets. The transfer direction may be driven by the internal pressure difference between the contacting lipid droplet pair. Its role in neutral lipid transfer and lipid droplet enlargement is activated by the interaction with PLIN1. May also act as a CEBPB coactivator in the white adipose tissue to control the expression of a subset of CEBPB downstream target genes, including SOCS1, SOCS3, TGFB1, TGFBR1, ID2 and XDH. When overexpressed in preadipocytes, induces apoptosis or increases cell susceptibility to apoptosis induced by serum deprivation or TGFB treatment. The chain is Lipid transferase CIDEC from Bos taurus (Bovine).